The primary structure comprises 570 residues: Urease subunit alpha (570 aa).

The region spanning 132 to 570 (GGIDTHVHFL…VPMARRYFLF (439 aa)) is the Urease domain. Residues His137, His139, and Lys220 each contribute to the Ni(2+) site. Lys220 carries the N6-carboxylysine modification. A substrate-binding site is contributed by His222. His249 and His275 together coordinate Ni(2+). His323 acts as the Proton donor in catalysis. Asp363 contributes to the Ni(2+) binding site.

The protein belongs to the metallo-dependent hydrolases superfamily. Urease alpha subunit family. In terms of assembly, heterotrimer of UreA (gamma), UreB (beta) and UreC (alpha) subunits. Three heterotrimers associate to form the active enzyme. The cofactor is Ni cation. In terms of processing, carboxylation allows a single lysine to coordinate two nickel ions.

The protein resides in the cytoplasm. It catalyses the reaction urea + 2 H2O + H(+) = hydrogencarbonate + 2 NH4(+). Its pathway is nitrogen metabolism; urea degradation; CO(2) and NH(3) from urea (urease route): step 1/1. The sequence is that of Urease subunit alpha from Corynebacterium glutamicum (strain ATCC 13032 / DSM 20300 / JCM 1318 / BCRC 11384 / CCUG 27702 / LMG 3730 / NBRC 12168 / NCIMB 10025 / NRRL B-2784 / 534).